Consider the following 344-residue polypeptide: Arginine N-succinyltransferase (344 aa).

Leu-125 is a binding site for succinyl-CoA. His-229 serves as the catalytic Proton donor.

The protein belongs to the arginine N-succinyltransferase family.

It catalyses the reaction succinyl-CoA + L-arginine = N(2)-succinyl-L-arginine + CoA + H(+). It participates in amino-acid degradation; L-arginine degradation via AST pathway; L-glutamate and succinate from L-arginine: step 1/5. Catalyzes the transfer of succinyl-CoA to arginine to produce N(2)-succinylarginine. The polypeptide is Arginine N-succinyltransferase (Escherichia coli O157:H7).